The following is a 1055-amino-acid chain: Elongation factor 3 (1055 aa).

ADP is bound at residue Val-45. 7 HEAT repeats span residues 45–86 (VEFF…NGAA), 96–133 (SAEN…SMNP), 135–172 (ASFV…SAPY), 175–213 (GEAM…LVEN), 217–255 (EKFV…APTI), 257–290 (LIAP…LVDS), and 295–337 (RPFL…VPVE). 2 consecutive ABC transporter domains span residues 447–659 (CNIE…SYYQ) and 687–1004 (LKMR…KKAG). Positions 723, 933, 936, and 962 each coordinate ADP. 2 disordered regions span residues 987–1006 (HNWV…AGDD) and 1024–1055 (EKKL…DEEL). Basic residues predominate over residues 1033 to 1044 (RKAKKDRMARRK).

The protein belongs to the ABC transporter superfamily. ABCF family. EF3 subfamily. In terms of assembly, associates with ribosomes.

Its subcellular location is the cytoplasm. It is found in the cytosol. The enzyme catalyses ATP + H2O = ADP + phosphate + H(+). Its pathway is protein biosynthesis; polypeptide chain elongation. Functionally, ribosome-dependent ATPase that functions in cytoplasmic translation elongation. Required for the ATP-dependent release of deacylated tRNA from the ribosomal E-site during protein biosynthesis. Stimulates the eEF1A-dependent binding of aminoacyl-tRNA to the ribosomal A-site, which has reduced affinity for tRNA as long as the E-site is occupied. Assists translation termination by stimulating the release of nascent protein from the ribosome by release factors. Appears to target calcium-channel protein CCH1 to the plasma membrane. This is Elongation factor 3 from Cryptococcus neoformans var. neoformans serotype D (strain JEC21 / ATCC MYA-565) (Filobasidiella neoformans).